Reading from the N-terminus, the 506-residue chain is bZIP transcription factor TGA10 (506 aa).

Disordered regions lie at residues 22-50 and 113-218; these read VSYMDSSNKNQDPSESNNQISFGGQHQHH and PSSI…KTLR. Polar residues-rich tracts occupy residues 25–45, 113–124, 142–152, and 160–180; these read MDSSNKNQDPSESNNQISFGG, PSSIQEQRQNSG, PSTTNKMNTGL, and SKRSSQPSMELSNNLKNNDAP. The segment covering 207-216 has biased composition (basic and acidic residues); sequence DAPKTPDPKT. Positions 213–257 constitute a bZIP domain; sequence DPKTLRRLAQNREAARKSRLRKKAYVQQLESSRIRLTQLEQELQR. Residues 215-235 are basic motif; it reads KTLRRLAQNREAARKSRLRKK. A Nuclear localization signal motif is present at residues 217–224; it reads LRRLAQNR. Positions 241 to 255 are leucine-zipper; the sequence is LESSRIRLTQLEQEL. Residues 288–502 form the DOG1 domain; it reads AAVFDMEYAR…RALSSLWHAR (215 aa).

It belongs to the bZIP family. In terms of assembly, binds DNA as a dimer. Interacts with TGA2.2. Specifically expressed in roots.

The protein localises to the nucleus. Its function is as follows. Transcription activator that binds to as1-like elements (5'-TGACGTAAgggaTGACGCA-3') in promoters of target genes. Regulates transcription in response to plant signaling molecules salicylic acid (SA), methyl jasmonate (MJ) and auxin (2,4D) only in leaves. Prevents lateral branching and may repress defense signaling. This chain is bZIP transcription factor TGA10, found in Nicotiana tabacum (Common tobacco).